The sequence spans 132 residues: MASSASSVVRATVRAVSKRKIQATRAALTLTPSAVQKIKELLKDKPEHVGVKVGVRTRGCNGLSYTLEYTKSKGDSDEEVVQDGVRVFIEKKAQLTLLGTEMDYVEDKLSSEFVFNNPNIKGTCGCGESFNI.

A mitochondrion-targeting transit peptide spans 1-15; sequence MASSASSVVRATVRA. Fe cation-binding residues include C60, C124, and C126.

Belongs to the HesB/IscA family. Homooligomer, forming a rod-shaped structure 24 nm in length that may arise through a double-helical assembly of subunits. Interacts with CRY4; CRY4 seems to be associated with the outside of the rod-shaped homooligomer. Does not interact with CRY1 or CRY2. As to expression, detected in retina, especially in the retinal ganglion layer, the inner nuclear layer and the outer nuclear layer. Detected in retina visual pigment cells (at protein level).

Its subcellular location is the mitochondrion. Its function is as follows. Involved in the maturation of mitochondrial 4Fe-4S proteins functioning late in the iron-sulfur cluster assembly pathway. Probably involved in the binding of an intermediate of Fe/S cluster assembly. Component of a putative magnetoreceptor complex formed by ISCA1 and CRY4, a member of the cryptochrome family that are known to be required for light-dependent magnetosensitivity in various orgnisms. The rod-like assembly may facilitate the perception of the Earth's weak magnetic field. Both ISCA1 and the complex with CRY4 have magnetic properties and are attracted to iron beads. When exposed to a magnetic field of 1 mT (superior to the natural magnetic field), over 50% of the rod-like complexes align more or less in parallel with the magnetic field at room temperature. This chain is Iron-sulfur cluster assembly 1 homolog, mitochondrial (ISCA1), found in Columba livia (Rock dove).